The chain runs to 298 residues: Glycine--tRNA ligase alpha subunit (298 aa).

This sequence belongs to the class-II aminoacyl-tRNA synthetase family. In terms of assembly, tetramer of two alpha and two beta subunits.

The protein localises to the cytoplasm. It catalyses the reaction tRNA(Gly) + glycine + ATP = glycyl-tRNA(Gly) + AMP + diphosphate. In Helicobacter pylori (strain J99 / ATCC 700824) (Campylobacter pylori J99), this protein is Glycine--tRNA ligase alpha subunit (glyQ).